The sequence spans 363 residues: Photosystem II protein D1 1 (363 aa).

Transmembrane regions (helical) follow at residues 32–49 (YVGW…VSAI), 121–136 (HFLI…QWEL), and 145–159 (WIAM…AATA). Histidine 121 provides a ligand contact to chlorophyll a. Tyrosine 129 lines the pheophytin a pocket. [CaMn4O5] cluster-binding residues include glutamate 173 and glutamate 192. A helical membrane pass occupies residues 200 to 221 (FHMLGVVGVFGGAFLSAMHGSL). Histidine 201 provides a ligand contact to chlorophyll a. A quinone contacts are provided by residues histidine 218 and 268–269 (AF). Histidine 218 contacts Fe cation. Histidine 276 is a binding site for Fe cation. The helical transmembrane segment at 278-292 (LLAVLPTIGIWFAAL) threads the bilayer. Residues histidine 336 and alanine 348 each contribute to the [CaMn4O5] cluster site. A propeptide spanning residues 349-363 (STESKEIPTIPIMTS) is cleaved from the precursor.

Belongs to the reaction center PufL/M/PsbA/D family. As to quaternary structure, PSII is composed of 1 copy each of membrane proteins PsbA, PsbB, PsbC, PsbD, PsbE, PsbF, PsbH, PsbI, PsbJ, PsbK, PsbL, PsbM, PsbT, PsbX, PsbY, PsbZ, Psb30/Ycf12, peripheral proteins PsbO, CyanoQ (PsbQ), PsbU, PsbV and a large number of cofactors. It forms dimeric complexes. The cofactor is The D1/D2 heterodimer binds P680, chlorophylls that are the primary electron donor of PSII, and subsequent electron acceptors. It shares a non-heme iron and each subunit binds pheophytin, quinone, additional chlorophylls, carotenoids and lipids. D1 provides most of the ligands for the Mn4-Ca-O5 cluster of the oxygen-evolving complex (OEC). There is also a Cl(-1) ion associated with D1 and D2, which is required for oxygen evolution. The PSII complex binds additional chlorophylls, carotenoids and specific lipids.. Post-translationally, tyr-164 forms a radical intermediate that is referred to as redox-active TyrZ, YZ or Y-Z. C-terminally processed by CtpA; processing is essential to allow assembly of the oxygen-evolving complex and thus photosynthetic growth.

It is found in the cellular thylakoid membrane. It catalyses the reaction 2 a plastoquinone + 4 hnu + 2 H2O = 2 a plastoquinol + O2. In terms of biological role, photosystem II (PSII) is a light-driven water:plastoquinone oxidoreductase that uses light energy to abstract electrons from H(2)O, generating O(2) and a proton gradient subsequently used for ATP formation. It consists of a core antenna complex that captures photons, and an electron transfer chain that converts photonic excitation into a charge separation. The D1/D2 (PsbA/PsbD) reaction center heterodimer binds P680, the primary electron donor of PSII as well as several subsequent electron acceptors. This chain is Photosystem II protein D1 1, found in Acaryochloris marina (strain MBIC 11017).